Reading from the N-terminus, the 450-residue chain is MSHRYIPLTEKDKKEMLDKIGASSINELFGDVPKDILLNRDLNIASGEAETSLLRRLNTVANKNVTKETHASFLGAGVYDHYAPAVVDAMISRSEFYTAYTPYQPEISQGELQAIFEFQTLICELTDMDVANSSMYDGITSFAEACILAFNHTKKNKIVVSKGLHYQALQVLKTYVKVREEFEIVEVDLDGTITDLEKLEQAVDDETAAVAVQYPNFYGSVEDLEKIQSFIEGKKALFIVYANPLALGLLTPPGSFGADIVVGDTQPFGIPTQFGGPHCGYFATTKKLMRKVPGRLVGQTQDDEGNRGFVLTLQAREQHIRRDKATSNICSNQALNALASSIAMSALGKQGIYDIAVQNLEHANYAKNQFKDNGFEVLDGTSFNEFVVKFDQPIKDINKKLAKHGFIGGFDLGEASADFENHMLIAVTELRTKDEIDTFVKKAGELNGSK.

The protein belongs to the GcvP family. N-terminal subunit subfamily. The glycine cleavage system is composed of four proteins: P, T, L and H. In this organism, the P 'protein' is a heterodimer of two subunits.

It carries out the reaction N(6)-[(R)-lipoyl]-L-lysyl-[glycine-cleavage complex H protein] + glycine + H(+) = N(6)-[(R)-S(8)-aminomethyldihydrolipoyl]-L-lysyl-[glycine-cleavage complex H protein] + CO2. The glycine cleavage system catalyzes the degradation of glycine. The P protein binds the alpha-amino group of glycine through its pyridoxal phosphate cofactor; CO(2) is released and the remaining methylamine moiety is then transferred to the lipoamide cofactor of the H protein. The protein is Probable glycine dehydrogenase (decarboxylating) subunit 1 of Staphylococcus haemolyticus (strain JCSC1435).